The primary structure comprises 99 residues: MAEGGFDPCECICSHEHAMRRLINLLRQSQSYCTDTECLRELPGPSGDSGISITVILMAWMVIAVLLFLLRPPNLRGSSLPGKPSSPHSGQDPPAPPVD.

The Lumenal segment spans residues Met-1–Ser-49. Residues Gly-50–Leu-70 traverse the membrane as a helical segment. The Cytoplasmic segment spans residues Arg-71–Asp-99. A disordered region spans residues Gly-77–Asp-99.

The protein resides in the endoplasmic reticulum membrane. The protein is Small integral membrane protein 14 (Smim14) of Rattus norvegicus (Rat).